Reading from the N-terminus, the 212-residue chain is Methylthioribulose-1-phosphate dehydratase (212 aa).

Zn(2+) contacts are provided by H97 and H99.

It belongs to the aldolase class II family. MtnB subfamily. Homotetramer. Zn(2+) serves as cofactor.

It catalyses the reaction 5-(methylsulfanyl)-D-ribulose 1-phosphate = 5-methylsulfanyl-2,3-dioxopentyl phosphate + H2O. The protein operates within amino-acid biosynthesis; L-methionine biosynthesis via salvage pathway; L-methionine from S-methyl-5-thio-alpha-D-ribose 1-phosphate: step 2/6. In terms of biological role, catalyzes the dehydration of methylthioribulose-1-phosphate (MTRu-1-P) into 2,3-diketo-5-methylthiopentyl-1-phosphate (DK-MTP-1-P). The sequence is that of Methylthioribulose-1-phosphate dehydratase from Bacillus cereus (strain ZK / E33L).